The sequence spans 216 residues: MEQFTIHTGLVAPLDRENVDTDAIIPKQFLKSIKRTGFGPNLFDEWRYKDVGEPGQDNSKRPLNPDFVLNQPRYQGASVLLARKNFGCGSSREHAPWALQQYGFRAIIAPSFADIFFNNCFKNGLLPIVLTESQVDHLFNETQAFTGYQLTVDLDKQVVVTPGGTAYPFDVTAFRKYCLLNGFDDIGLTLRYADQIKAYEAQRLAKMPWLAHKLVG.

The protein belongs to the LeuD family. LeuD type 1 subfamily. In terms of assembly, heterodimer of LeuC and LeuD.

The catalysed reaction is (2R,3S)-3-isopropylmalate = (2S)-2-isopropylmalate. It functions in the pathway amino-acid biosynthesis; L-leucine biosynthesis; L-leucine from 3-methyl-2-oxobutanoate: step 2/4. In terms of biological role, catalyzes the isomerization between 2-isopropylmalate and 3-isopropylmalate, via the formation of 2-isopropylmaleate. This chain is 3-isopropylmalate dehydratase small subunit, found in Ralstonia nicotianae (strain ATCC BAA-1114 / GMI1000) (Ralstonia solanacearum).